Consider the following 136-residue polypeptide: Large ribosomal subunit protein uL16c (136 aa).

It belongs to the universal ribosomal protein uL16 family. Part of the 50S ribosomal subunit.

The protein localises to the plastid. It localises to the chloroplast. The protein is Large ribosomal subunit protein uL16c of Zea mays (Maize).